The primary structure comprises 82 residues: Putative membrane protein insertion efficiency factor (82 aa).

This sequence belongs to the UPF0161 family.

Its subcellular location is the cell inner membrane. Its function is as follows. Could be involved in insertion of integral membrane proteins into the membrane. In Rickettsia typhi (strain ATCC VR-144 / Wilmington), this protein is Putative membrane protein insertion efficiency factor.